The chain runs to 286 residues: Pyridoxal kinase PdxY (286 aa).

Substrate is bound by residues S9 and 44 to 45; that span reads MQ. ATP is bound by residues D111, E147, and K180. D221 is a binding site for substrate.

This sequence belongs to the pyridoxine kinase family. PdxY subfamily. In terms of assembly, homodimer. Mg(2+) is required as a cofactor.

It carries out the reaction pyridoxal + ATP = pyridoxal 5'-phosphate + ADP + H(+). The protein operates within cofactor metabolism; pyridoxal 5'-phosphate salvage; pyridoxal 5'-phosphate from pyridoxal: step 1/1. Pyridoxal kinase involved in the salvage pathway of pyridoxal 5'-phosphate (PLP). Catalyzes the phosphorylation of pyridoxal to PLP. The protein is Pyridoxal kinase PdxY of Burkholderia lata (strain ATCC 17760 / DSM 23089 / LMG 22485 / NCIMB 9086 / R18194 / 383).